The following is a 158-amino-acid chain: Transcription elongation factor GreA (158 aa).

Residues 45-72 (AEYHAAREQQSFIEGRIKQLEGELSHAE) adopt a coiled-coil conformation.

It belongs to the GreA/GreB family.

Functionally, necessary for efficient RNA polymerase transcription elongation past template-encoded arresting sites. The arresting sites in DNA have the property of trapping a certain fraction of elongating RNA polymerases that pass through, resulting in locked ternary complexes. Cleavage of the nascent transcript by cleavage factors such as GreA or GreB allows the resumption of elongation from the new 3'terminus. GreA releases sequences of 2 to 3 nucleotides. This chain is Transcription elongation factor GreA, found in Xanthomonas campestris pv. campestris (strain ATCC 33913 / DSM 3586 / NCPPB 528 / LMG 568 / P 25).